Consider the following 755-residue polypeptide: Probable ubiquitin carboxyl-terminal hydrolase creB (755 aa).

The segment at 1–32 is disordered; the sequence is MGSFLRSLRRDVGPPTPSVGATPAKKEPPVPP. Residues 55–468 form the USP domain; it reads FGMENYGNTC…CAYVLFYQET (414 aa). The active-site Nucleophile is the C64. Disordered regions lie at residues 119 to 146 and 237 to 270; these read EKQKAANAQRPGAPPNQPQKPEDKDSPE and EASKQPEPERSLPPAESADSTELSGSSGSKTPNT. Positions 237–246 are enriched in basic and acidic residues; it reads EASKQPEPER. The segment covering 254-270 has biased composition (polar residues); that stretch reads ADSTELSGSSGSKTPNT. H419 serves as the catalytic Proton acceptor. Residues 495–755 form a disordered region; sequence TLKQNGYPLS…LKKKSFSILS (261 aa). Residues 547–560 show a composition bias toward low complexity; sequence ESSPADPSTTASAT. The segment covering 577–648 has biased composition (basic and acidic residues); sequence KKSDSHFKKE…RRHSPDDTKK (72 aa). Residues 581-630 are a coiled coil; the sequence is SHFKKERAKEEKERKANEKEKEKQRRRDQEARIREQRREDAEIRAALEAS. A compositionally biased stretch (basic residues) spans 654–666; sequence SRLKRGSKSFSHR. A compositionally biased stretch (polar residues) spans 693–709; that stretch reads NGASESQQQLPNGQSPG. Residues 718–733 show a composition bias toward basic and acidic residues; sequence TGLDEERDTLKDPKHD. Residues 734 to 755 are compositionally biased toward basic residues; the sequence is RSGHHGKWRSFSLKKKSFSILS.

This sequence belongs to the peptidase C19 family. In terms of assembly, interacts with creA, creC and qutD.

The catalysed reaction is Thiol-dependent hydrolysis of ester, thioester, amide, peptide and isopeptide bonds formed by the C-terminal Gly of ubiquitin (a 76-residue protein attached to proteins as an intracellular targeting signal).. Functionally, ubiquitin thioesterase component of the regulatory network controlling carbon source utilization through ubiquitination and deubiquitination involving creA, creB, creC, creD and acrB. Deubiquitinates the creA catabolic repressor and the quinate permease qutD. Also plays a role in response to carbon starvation and the control of extracellular proteases activity. This is Probable ubiquitin carboxyl-terminal hydrolase creB (creB) from Aspergillus flavus (strain ATCC 200026 / FGSC A1120 / IAM 13836 / NRRL 3357 / JCM 12722 / SRRC 167).